We begin with the raw amino-acid sequence, 379 residues long: MLAVHFGAGNIGRGFIGSLLSQSRYNVVFVDVNEKIVQALQQKGQYEVIIAGETTQTQVVRNVSALHSQHQQNEIIDQIARADLVTTAVGPNILPLISQTIAEGLKKRLTDRPVHIIACENMIGGSEHLKTYVWEHLSEQEQTSLEDKCGFLNCAVDRIVPNQTHEDPLTVVVEPFFEWVIETKEVIGNIPHIIGAHFVDDLQPYIERKLFTVNTGHALVAYLGYRKKYETIRQAMEDQDILADVTNALRESGRVLVHQYGWNEAEHQAYIEKIVQRFINPSMTDEVTRVARSPIRKLGPNDRLIRPAMKYYECFGEVPASLAKGIAALLLFDYEGDAEAVQLQQTIKESGVEGALEKYAKLPSNHPIVVEVKKQMLYM.

Residue 3–14 (AVHFGAGNIGRG) coordinates NAD(+).

Belongs to the mannitol dehydrogenase family.

The enzyme catalyses D-mannitol 1-phosphate + NAD(+) = beta-D-fructose 6-phosphate + NADH + H(+). The protein is Mannitol-1-phosphate 5-dehydrogenase of Anoxybacillus flavithermus (strain DSM 21510 / WK1).